We begin with the raw amino-acid sequence, 281 residues long: Protein-S-isoprenylcysteine O-methyltransferase (281 aa).

Residues 1–2 (ML) are Cytoplasmic-facing. Residues 3–29 (SPAGKISLQSFTGSSLVFFVICMFNHY) form a helical membrane-spanning segment. Residues 30 to 35 (YGITNL) lie on the Lumenal side of the membrane. A helical transmembrane segment spans residues 36–53 (VVNTLIVFFYAVNVYFFL). The Cytoplasmic segment spans residues 54 to 58 (KFFYN). The helical transmembrane segment at 59–85 (EFAFAIAIRAAFLGLVLVLGLYIKLVA) threads the bilayer. The Lumenal segment spans residues 86–88 (PPN). Residues 89–113 (IQIFGGYMSVMALFHYSEFLAIAIV) traverse the membrane as a helical segment. Residues 114-118 (QPKQV) are Cytoplasmic-facing. The chain crosses the membrane as a helical span at residues 119 to 149 (STDSFVINHSPQYTIAAVSSWVEFFIETYFF). Residues 150 to 155 (PGLKEI) are Lumenal-facing. A helical transmembrane segment spans residues 156-181 (HWLSNIGLCVCILGEVLRKTAILTAG). Residues 182–208 (SNFNHLVQCEKSSDHVLVTHGVYAWFR) lie on the Cytoplasmic side of the membrane. S-adenosyl-L-methionine is bound by residues Gln189, 196-199 (HVLV), Tyr204, and 209-212 (HPSY). The chain crosses the membrane as a helical span at residues 209–226 (HPSYVGWFYWSIGTQIIL). Over 227 to 229 (INP) the chain is Lumenal. The helical transmembrane segment at 230-243 (LCIPAYTLASWMFF) threads the bilayer. Topologically, residues 244 to 281 (KERIYIEESMLLSFFGQQYCDYQQQVGTGIPFIEGYKI) are cytoplasmic. Position 246 (Arg246) interacts with substrate. Glu250 lines the S-adenosyl-L-methionine pocket.

The protein belongs to the class VI-like SAM-binding methyltransferase superfamily. Isoprenylcysteine carboxyl methyltransferase family.

It localises to the endoplasmic reticulum membrane. The catalysed reaction is [protein]-C-terminal S-[(2E,6E)-farnesyl]-L-cysteine + S-adenosyl-L-methionine = [protein]-C-terminal S-[(2E,6E)-farnesyl]-L-cysteine methyl ester + S-adenosyl-L-homocysteine. Functionally, catalyzes the post-translational methylation of isoprenylated C-terminal cysteine residues. This Tribolium castaneum (Red flour beetle) protein is Protein-S-isoprenylcysteine O-methyltransferase.